A 232-amino-acid chain; its full sequence is Uracil-DNA glycosylase (232 aa).

Residue Asp70 is the Proton acceptor of the active site.

This sequence belongs to the uracil-DNA glycosylase (UDG) superfamily. UNG family.

It is found in the cytoplasm. It carries out the reaction Hydrolyzes single-stranded DNA or mismatched double-stranded DNA and polynucleotides, releasing free uracil.. Excises uracil residues from the DNA which can arise as a result of misincorporation of dUMP residues by DNA polymerase or due to deamination of cytosine. The chain is Uracil-DNA glycosylase from Campylobacter fetus subsp. fetus (strain 82-40).